The sequence spans 438 residues: GDP-mannose 6-dehydrogenase (438 aa).

Tyr-10, Val-11, Asp-30, Lys-35, Thr-86, and Thr-124 together coordinate NAD(+). Residues Glu-161, Lys-210, Asn-214, His-217, Asn-225, Tyr-256, Tyr-257, Arg-259, Phe-262, and Gly-265 each contribute to the GDP-alpha-D-mannuronate site. Cys-268 is a catalytic residue. Residue Lys-271 coordinates NAD(+). Lys-324 lines the GDP-alpha-D-mannuronate pocket. Arg-331 contributes to the NAD(+) binding site.

This sequence belongs to the UDP-glucose/GDP-mannose dehydrogenase family.

It catalyses the reaction GDP-alpha-D-mannose + 2 NAD(+) + H2O = GDP-alpha-D-mannuronate + 2 NADH + 3 H(+). It functions in the pathway glycan biosynthesis; alginate biosynthesis. In terms of biological role, catalyzes the oxidation of guanosine diphospho-D-mannose (GDP-D-mannose) to GDP-D-mannuronic acid, a precursor for alginate polymerization. The alginate layer causes a mucoid phenotype and provides a protective barrier against host immune defenses and antibiotics. This is GDP-mannose 6-dehydrogenase (algD) from Pseudomonas savastanoi pv. phaseolicola (Pseudomonas syringae pv. phaseolicola).